A 196-amino-acid chain; its full sequence is Large ribosomal subunit protein mL66 (196 aa).

The transit peptide at 1-34 (MAALKALVSGCGRLLRGLLAGPAATSWSRLPARG) directs the protein to the mitochondrion.

Belongs to the bacterial ribosomal protein bS18 family. Mitochondrion-specific ribosomal protein mL66 subfamily. As to quaternary structure, component of the mitochondrial large ribosomal subunit (mt-LSU). Mature mammalian 55S mitochondrial ribosomes consist of a small (28S) and a large (39S) subunit. The 28S small subunit contains a 12S ribosomal RNA (12S mt-rRNA) and 30 different proteins. The 39S large subunit contains a 16S rRNA (16S mt-rRNA), a copy of mitochondrial valine transfer RNA (mt-tRNA(Val)), which plays an integral structural role, and 52 different proteins. mL66 forms a zinc-binding site with uL10m.

The protein resides in the mitochondrion. The protein is Large ribosomal subunit protein mL66 (MRPS18A) of Homo sapiens (Human).